Consider the following 298-residue polypeptide: Putative glycylpeptide N-tetradecanoyltransferase (298 aa).

It belongs to the NMT family.

It catalyses the reaction N-terminal glycyl-[protein] + tetradecanoyl-CoA = N-tetradecanoylglycyl-[protein] + CoA + H(+). Its function is as follows. Adds a myristoyl group to the N-terminal glycine residue of certain proteins. The polypeptide is Putative glycylpeptide N-tetradecanoyltransferase (Melanoplus sanguinipes (Migratory grasshopper)).